A 473-amino-acid chain; its full sequence is SHC-transforming protein 1 (473 aa).

Residues 1-26 (MNKLSGGGGRRTRVEGGQLGGEEWTR) form a disordered region. Ser-29 is subject to Phosphoserine. Lys-44 carries the post-translational modification N6-acetyllysine. Residues 46-229 (MGPGVSYLVR…AGFDGSAWDE (184 aa)) enclose the PID domain. The interval 216 to 314 (HDRMAGFDGS…PSSGRELFDD (99 aa)) is disordered. The interval 230–377 (EEEEPPDHQY…AMAEQLRGEP (148 aa)) is CH1. Phosphotyrosine is present on residues Tyr-239, Tyr-240, and Tyr-317. Residues 328 to 348 (QAGAGAGPPNPTINGSAPRDL) are disordered. Ser-343 is modified (phosphoserine). The SH2 domain occupies 378–469 (WFHGKLSRRE…GSELCLQQPV (92 aa)).

As to quaternary structure, interacts with CPNE3; this interaction may mediate the binding of CPNE3 with ERBB2. Interacts with the Trk receptors NTRK1, NTRK2 and NTRK3; in a phosphotyrosine-dependent manner. Interacts with the NPXY motif of tyrosine-phosphorylated IGF1R and INSR in vitro via the PID domain. Once activated, binds to GRB2. Interacts with tyrosine-phosphorylated CD3T and DDR2. Interacts with the N-terminal region of APS. Interacts with phosphorylated LRP1 and IRS4. Interacts with INPP5D/SHIP1 and INPPL1/SHIP2. Interacts with ALK, GAB2, GRB7 and KIT. Interacts with PTPN6/SHP (tyrosine phosphorylated). Identified in a complex containing FGFR4, NCAM1, CDH2, PLCG1, FRS2, SRC, SHC1, GAP43 and CTTN. Interacts with FLT4 (tyrosine-phosphorylated). Interacts with EPHB1 and GRB2; activates the MAPK/ERK cascade to regulate cell migration. Interacts with PDGFRB (tyrosine-phosphorylated). Interacts with ERBB4. Interacts with TEK/TIE2 (tyrosine-phosphorylated). Interacts with PTK2/FAK1. Interacts with CEACAM1; this interaction is CEACAM1-phosphorylation-dependent and mediates interaction with EGFR or INSR resulting in decrease coupling of SHC1 to the MAPK3/ERK1-MAPK1/ERK2 pathway. Interacts (via PID domain) with PEAK1 (when phosphorylated). Found in a complex with PPP1CA, PPP1CC, SHC1 and PEAK1. In terms of processing, phosphorylated by activated epidermal growth factor receptor. Phosphorylated in response to KIT signaling. Tyrosine phosphorylated in response to FLT3 and FLT4 signaling and by ligand-activated ALK. Tyrosine phosphorylated by ligand-activated PDGFRB. Tyrosine phosphorylated by TEK/TIE2. May be tyrosine phosphorylated by activated PTK2/FAK1. Tyrosine phosphorylated by activated PTK2B/PYK2. Dephosphorylation by PTPN2 may regulate interaction with GRB2.

The protein localises to the cytoplasm. The protein resides in the cell junction. It localises to the focal adhesion. Its function is as follows. Signaling adapter that couples activated growth factor receptors to signaling pathways. Participates in a signaling cascade initiated by activated KIT and KITLG/SCF. Participates in signaling downstream of the angiopoietin receptor TEK/TIE2, and plays a role in the regulation of endothelial cell migration and sprouting angiogenesis. The sequence is that of SHC-transforming protein 1 (SHC1) from Bos taurus (Bovine).